The primary structure comprises 292 residues: Protease HtpX homolog (292 aa).

Helical transmembrane passes span 9-29 and 31-51; these read TGVL…VLGN and TGMM…YWYS. His-133 serves as a coordination point for Zn(2+). Glu-134 is an active-site residue. Residue His-137 coordinates Zn(2+). The next 2 helical transmembrane spans lie at 148 to 168 and 185 to 205; these read LAAV…WMLW and LGAI…QMAI. Glu-210 serves as a coordination point for Zn(2+).

The protein belongs to the peptidase M48B family. The cofactor is Zn(2+).

The protein localises to the cell membrane. The polypeptide is Protease HtpX homolog (Thermococcus sibiricus (strain DSM 12597 / MM 739)).